The sequence spans 432 residues: Trigger factor (432 aa).

The region spanning 161–246 is the PPIase FKBP-type domain; the sequence is EDRVTLDFTG…LKKVEERELP (86 aa).

Belongs to the FKBP-type PPIase family. Tig subfamily.

It is found in the cytoplasm. It catalyses the reaction [protein]-peptidylproline (omega=180) = [protein]-peptidylproline (omega=0). In terms of biological role, involved in protein export. Acts as a chaperone by maintaining the newly synthesized protein in an open conformation. Functions as a peptidyl-prolyl cis-trans isomerase. The polypeptide is Trigger factor (Salmonella arizonae (strain ATCC BAA-731 / CDC346-86 / RSK2980)).